Consider the following 505-residue polypeptide: Zinc finger protein 649 (505 aa).

The region spanning 8-79 (LTLEDVAVDF…EDEIHSPAHP (72 aa)) is the KRAB domain. K112 participates in a covalent cross-link: Glycyl lysine isopeptide (Lys-Gly) (interchain with G-Cter in SUMO2). C2H2-type zinc fingers lie at residues 178-200 (HECT…KRIH), 206-228 (HVCS…ERAH), 234-256 (HGCS…ERAH), 262-284 (YGCS…QRIH), 290-312 (HQCS…QRTH), 318-340 (HTCS…QRTH), 346-368 (YGCI…QRYH), 374-396 (FVCP…QKIH), 402-424 (YKCS…HRTH), and 430-452 (YGCD…KRIH). The interval 455–481 (EKRGDSVKVENPSTASHSLSPSEHVQG) is disordered. Positions 465 to 477 (NPSTASHSLSPSE) are enriched in polar residues.

It belongs to the krueppel C2H2-type zinc-finger protein family. Highly expressed in heart, skeletal muscle, and brain. Lower expression in liver, lung, kidney, pancreas and placenta.

Its subcellular location is the nucleus. Its function is as follows. Transcriptional repressor. Regulator of transcriptional factor complexes and may suppress SRE and AP-1 transcription activities mediated by growth factor signaling pathways. This Homo sapiens (Human) protein is Zinc finger protein 649 (ZNF649).